The sequence spans 433 residues: 23S rRNA (uracil(1939)-C(5))-methyltransferase RlmD (433 aa).

In terms of domain architecture, TRAM spans 10 to 68 (RTTTRQIITVSVNDLDSFGQGVARHNGKTLFIPGLLPQENAEVAVTEDKKQYARAKVVR). Residues Cys81, Cys87, Cys90, and Cys162 each coordinate [4Fe-4S] cluster. 6 residues coordinate S-adenosyl-L-methionine: Gln265, Phe294, Asn299, Glu315, Asn342, and Asp363. The Nucleophile role is filled by Cys389.

Belongs to the class I-like SAM-binding methyltransferase superfamily. RNA M5U methyltransferase family. RlmD subfamily.

The enzyme catalyses uridine(1939) in 23S rRNA + S-adenosyl-L-methionine = 5-methyluridine(1939) in 23S rRNA + S-adenosyl-L-homocysteine + H(+). Catalyzes the formation of 5-methyl-uridine at position 1939 (m5U1939) in 23S rRNA. The polypeptide is 23S rRNA (uracil(1939)-C(5))-methyltransferase RlmD (Shigella flexneri).